A 204-amino-acid chain; its full sequence is Molybdenum cofactor guanylyltransferase (204 aa).

GTP is bound by residues 10–12, lysine 23, asparagine 51, aspartate 69, and aspartate 99; that span reads LAG. Residue aspartate 99 participates in Mg(2+) binding.

It belongs to the MobA family. Monomer. It depends on Mg(2+) as a cofactor.

The protein resides in the cytoplasm. The enzyme catalyses Mo-molybdopterin + GTP + H(+) = Mo-molybdopterin guanine dinucleotide + diphosphate. Transfers a GMP moiety from GTP to Mo-molybdopterin (Mo-MPT) cofactor (Moco or molybdenum cofactor) to form Mo-molybdopterin guanine dinucleotide (Mo-MGD) cofactor. This Shewanella piezotolerans (strain WP3 / JCM 13877) protein is Molybdenum cofactor guanylyltransferase.